The sequence spans 339 residues: MFYKLAQKVMFQMDPELAHNIAIGSLKMTGNNLLNCFYRQQVKSSPVTCMGLTFPNPVGLAAGLDKDGESIDAFHAMGFGHVEVGTVTPRPQAGNDQPRLFRLKPAKGIINRMGFNNKGVDNLVRNLMAKKSDIMVGVNIGKNKDTPVEQGKDDYLICMEKVYQYASYIAVNISSPNTPGLRSMQYGELLDDLLSSIKAKQTELAAKHGKYVPVALKIAPDLTSEEISAIADSLMSNQFDGVIATNTTLSRDTVTDLKHAEEMGGLSGKPLADLSTQVIKQLAICLQGKIPIIGVGGINSAADALAKFDAGSTMVQIYSGFIYQGPKLVDQIARAYCAK.

FMN is bound by residues 62–66 (AGLDK) and Thr86. Residue Lys66 participates in substrate binding. A substrate-binding site is contributed by 111-115 (NRMGF). Residues Asn139 and Asn172 each coordinate FMN. Asn172 contributes to the substrate binding site. The active-site Nucleophile is Ser175. Asn177 serves as a coordination point for substrate. FMN contacts are provided by Lys217 and Thr245. Residue 246 to 247 (NT) participates in substrate binding. FMN-binding positions include Gly268, Gly297, and 318 to 319 (YS).

It belongs to the dihydroorotate dehydrogenase family. Type 2 subfamily. In terms of assembly, monomer. Requires FMN as cofactor.

It is found in the cell membrane. The catalysed reaction is (S)-dihydroorotate + a quinone = orotate + a quinol. It functions in the pathway pyrimidine metabolism; UMP biosynthesis via de novo pathway; orotate from (S)-dihydroorotate (quinone route): step 1/1. Catalyzes the conversion of dihydroorotate to orotate with quinone as electron acceptor. The sequence is that of Dihydroorotate dehydrogenase (quinone) from Shewanella frigidimarina (strain NCIMB 400).